Reading from the N-terminus, the 72-residue chain is Late control gene B protein (72 aa).

The sequence is that of Late control gene B protein (B) from Escherichia phage 186 (Bacteriophage 186).